The sequence spans 495 residues: Probable cytosol aminopeptidase (495 aa).

Mn(2+) contacts are provided by K266 and D271. Residue K278 is part of the active site. Mn(2+) is bound by residues D289, D348, and E350. The active site involves R352.

It belongs to the peptidase M17 family. Mn(2+) serves as cofactor.

The protein resides in the cytoplasm. The enzyme catalyses Release of an N-terminal amino acid, Xaa-|-Yaa-, in which Xaa is preferably Leu, but may be other amino acids including Pro although not Arg or Lys, and Yaa may be Pro. Amino acid amides and methyl esters are also readily hydrolyzed, but rates on arylamides are exceedingly low.. The catalysed reaction is Release of an N-terminal amino acid, preferentially leucine, but not glutamic or aspartic acids.. Functionally, presumably involved in the processing and regular turnover of intracellular proteins. Catalyzes the removal of unsubstituted N-terminal amino acids from various peptides. The chain is Probable cytosol aminopeptidase from Pseudomonas aeruginosa (strain LESB58).